The sequence spans 142 residues: Transcriptional regulator MraZ (142 aa).

SpoVT-AbrB domains follow at residues 5–47 (EYPY…PLAS) and 76–119 (ANKA…NPGR).

It belongs to the MraZ family. Forms oligomers.

It localises to the cytoplasm. Its subcellular location is the nucleoid. This Deinococcus deserti (strain DSM 17065 / CIP 109153 / LMG 22923 / VCD115) protein is Transcriptional regulator MraZ.